A 456-amino-acid chain; its full sequence is Bifunctional protein GlmU (456 aa).

A pyrophosphorylase region spans residues 1–228 (MTLPLHVLIL…PQDVEGANDP (228 aa)). UDP-N-acetyl-alpha-D-glucosamine-binding positions include 10–13 (LAAG), lysine 24, glutamine 76, 81–82 (GT), 103–105 (YGD), glycine 138, glutamate 153, asparagine 168, and asparagine 226. Aspartate 105 provides a ligand contact to Mg(2+). Residue asparagine 226 participates in Mg(2+) binding. The linker stretch occupies residues 229–249 (WQLAQLERAWQLRAARTLCLQ). Residues 250–456 (GVRMADPARV…GWKRPTKKSP (207 aa)) are N-acetyltransferase. UDP-N-acetyl-alpha-D-glucosamine-binding residues include arginine 332 and lysine 350. The Proton acceptor role is filled by histidine 362. UDP-N-acetyl-alpha-D-glucosamine is bound by residues tyrosine 365 and asparagine 376. Acetyl-CoA contacts are provided by residues alanine 379, 385 to 386 (NY), serine 404, alanine 422, and arginine 439.

The protein in the N-terminal section; belongs to the N-acetylglucosamine-1-phosphate uridyltransferase family. This sequence in the C-terminal section; belongs to the transferase hexapeptide repeat family. As to quaternary structure, homotrimer. Requires Mg(2+) as cofactor.

The protein resides in the cytoplasm. The enzyme catalyses alpha-D-glucosamine 1-phosphate + acetyl-CoA = N-acetyl-alpha-D-glucosamine 1-phosphate + CoA + H(+). The catalysed reaction is N-acetyl-alpha-D-glucosamine 1-phosphate + UTP + H(+) = UDP-N-acetyl-alpha-D-glucosamine + diphosphate. Its pathway is nucleotide-sugar biosynthesis; UDP-N-acetyl-alpha-D-glucosamine biosynthesis; N-acetyl-alpha-D-glucosamine 1-phosphate from alpha-D-glucosamine 6-phosphate (route II): step 2/2. It functions in the pathway nucleotide-sugar biosynthesis; UDP-N-acetyl-alpha-D-glucosamine biosynthesis; UDP-N-acetyl-alpha-D-glucosamine from N-acetyl-alpha-D-glucosamine 1-phosphate: step 1/1. It participates in bacterial outer membrane biogenesis; LPS lipid A biosynthesis. Its function is as follows. Catalyzes the last two sequential reactions in the de novo biosynthetic pathway for UDP-N-acetylglucosamine (UDP-GlcNAc). The C-terminal domain catalyzes the transfer of acetyl group from acetyl coenzyme A to glucosamine-1-phosphate (GlcN-1-P) to produce N-acetylglucosamine-1-phosphate (GlcNAc-1-P), which is converted into UDP-GlcNAc by the transfer of uridine 5-monophosphate (from uridine 5-triphosphate), a reaction catalyzed by the N-terminal domain. The sequence is that of Bifunctional protein GlmU from Xanthomonas axonopodis pv. citri (strain 306).